The chain runs to 250 residues: MSSNSIALAVIGGTGVYKLAQLDQVQTHEVDTPYGAPSGPIRVGMLLGHRVAFLARHGEGHSLPPHKVNYRANIAALQQIGATRVLALNTVGGITDSFGPRVLACPDQLIDYTWGRISTFCEEAGSEVQHVDFGHPYSPMFRSKVIAAAKVTGVTLVAGGCYGATQGPRLETIAEIARMRRDGCDLVGMTGMPEAALAREKGLEYACLAIVANWAAGCGDAQEITMAEVLSNVDAASSGLPELIGELARG.

Phosphate-binding positions include T14 and 56 to 57 (RH). M189 is a substrate binding site. T190 lines the phosphate pocket. 213 to 215 (NWA) provides a ligand contact to substrate.

It belongs to the PNP/MTAP phosphorylase family. MTAP subfamily. In terms of assembly, homotrimer.

The enzyme catalyses S-methyl-5'-thioinosine + phosphate = 5-(methylsulfanyl)-alpha-D-ribose 1-phosphate + hypoxanthine. It participates in purine metabolism; purine nucleoside salvage. Its function is as follows. Catalyzes the reversible phosphorylation of S-methyl-5'-thioinosine (MTI) to hypoxanthine and 5-methylthioribose-1-phosphate. Involved in the breakdown of S-methyl-5'-thioadenosine (MTA), a major by-product of polyamine biosynthesis. Catabolism of (MTA) occurs via deamination to MTI and phosphorolysis to hypoxanthine. This Xanthomonas campestris pv. campestris (strain ATCC 33913 / DSM 3586 / NCPPB 528 / LMG 568 / P 25) protein is Probable S-methyl-5'-thioinosine phosphorylase.